Consider the following 125-residue polypeptide: Holo-[acyl-carrier-protein] synthase (125 aa).

Asp-8 and Glu-57 together coordinate Mg(2+).

It belongs to the P-Pant transferase superfamily. AcpS family. Mg(2+) is required as a cofactor.

It localises to the cytoplasm. It catalyses the reaction apo-[ACP] + CoA = holo-[ACP] + adenosine 3',5'-bisphosphate + H(+). Functionally, transfers the 4'-phosphopantetheine moiety from coenzyme A to a Ser of acyl-carrier-protein. This Geotalea daltonii (strain DSM 22248 / JCM 15807 / FRC-32) (Geobacter daltonii) protein is Holo-[acyl-carrier-protein] synthase.